The following is a 78-amino-acid chain: MASGSGPGAAASANLNAVRETMDVLLEISRILNTGLDMETLSICVRLCEQGINPEALSSVIKELRKGTEALKAAENTS.

A2 bears the N-acetylalanine mark.

The protein belongs to the MOZART1 family. In terms of assembly, associates with the gamma-tubulin ring complex (gTuRC) consisting of TUBGCP2, TUBGCP3, TUBGCP4, TUBGCP5 and TUBGCP6 and gamma-tubulin TUBG1 or TUBG2; within the complex, interacts with TUBGCP3 and TUBGCP6 to form a luminal bridge with actin that stabilizes the initial structure during complex assembly. Interacts with TUBG1.

Its subcellular location is the cytoplasm. The protein localises to the cytoskeleton. The protein resides in the microtubule organizing center. It localises to the centrosome. It is found in the spindle. Required for the recruitment and the assembly of the gamma-tubulin ring complex (gTuRC) at the centrosome. The gTuRC regulates the minus-end nucleation of alpha-beta tubulin heterodimers that grow into microtubule protafilaments, a critical step in centrosome duplication and spindle formation. The protein is Mitotic-spindle organizing protein 1 (Mzt1) of Mus musculus (Mouse).